Reading from the N-terminus, the 297-residue chain is N-acetylneuraminate lyase (297 aa).

Positions 47 and 48 each coordinate aceneuramate. The active-site Proton donor is Y137. K165 serves as the catalytic Schiff-base intermediate with substrate. The aceneuramate site is built by T167, G189, D191, E192, and S208.

This sequence belongs to the DapA family. NanA subfamily. As to quaternary structure, homotetramer.

The protein localises to the cytoplasm. It carries out the reaction aceneuramate = aldehydo-N-acetyl-D-mannosamine + pyruvate. It participates in amino-sugar metabolism; N-acetylneuraminate degradation; D-fructose 6-phosphate from N-acetylneuraminate: step 1/5. Catalyzes the reversible aldol cleavage of N-acetylneuraminic acid (sialic acid; Neu5Ac) to form pyruvate and N-acetylmannosamine (ManNAc) via a Schiff base intermediate. The chain is N-acetylneuraminate lyase from Citrobacter koseri (strain ATCC BAA-895 / CDC 4225-83 / SGSC4696).